Here is a 318-residue protein sequence, read N- to C-terminus: Molybdenum cofactor insertion chaperone PaoD (318 aa).

As to quaternary structure, homodimer in solution. Interacts with MocA.

Its function is as follows. Chaperone required for the production of an active PaoABC aldehyde oxidoreductase. Stabilizes the PaoC subunit and is required for the insertion of the molybdenum cofactor into this subunit. Binds molybdenum cofactor. Binds the molybdopterin cytosine dinucleotide (MCD) form of the cofactor after its formation by the molybdenum cofactor cytidylyltransferase MocA. The protein is Molybdenum cofactor insertion chaperone PaoD of Escherichia coli (strain K12).